The chain runs to 150 residues: MKCPYCSAPDSRVVNSRPSDDGASIRRRRECLRCNRRFTTYERAQLEPLMVLKRGGQREAFNPDKLLRGLILATEKRPVDPEQLRAFAYGFEDEVQASEITSEEIGRRAMTFLRPLDDVAYIRFASVYRDFDSLERFIEEIQGLKGRGED.

The tract at residues 1–22 (MKCPYCSAPDSRVVNSRPSDDG) is disordered. A zinc finger lies at 3-34 (CPYCSAPDSRVVNSRPSDDGASIRRRRECLRC). The 88-residue stretch at 49 to 136 (LMVLKRGGQR…VYRDFDSLER (88 aa)) folds into the ATP-cone domain.

It belongs to the NrdR family. It depends on Zn(2+) as a cofactor.

Negatively regulates transcription of bacterial ribonucleotide reductase nrd genes and operons by binding to NrdR-boxes. The sequence is that of Transcriptional repressor NrdR from Deinococcus geothermalis (strain DSM 11300 / CIP 105573 / AG-3a).